Reading from the N-terminus, the 126-residue chain is Cysteine-rich tail protein 1 (126 aa).

The interval 1–89 (MDPHETLVKN…PAGLAYAGPP (89 aa)) is disordered.

The protein belongs to the CYSRT1 family. Interacts with components of the late cornfied envelope (LCE).

It localises to the cornified envelope. Its function is as follows. Component of the stratum corneum that may contribute to epidermal antimicrobial host defenses. This Bos taurus (Bovine) protein is Cysteine-rich tail protein 1 (CYSRT1).